Consider the following 331-residue polypeptide: Glyceraldehyde-3-phosphate dehydrogenase 2 (331 aa).

Residues 11 to 12 (RI), aspartate 33, and arginine 78 each bind NAD(+). D-glyceraldehyde 3-phosphate is bound by residues 148 to 150 (SCT), threonine 179, 208 to 209 (TG), and arginine 231. The active-site Nucleophile is the cysteine 149. Asparagine 313 is an NAD(+) binding site.

It belongs to the glyceraldehyde-3-phosphate dehydrogenase family. Homotetramer.

The protein localises to the cytoplasm. The catalysed reaction is D-glyceraldehyde 3-phosphate + phosphate + NAD(+) = (2R)-3-phospho-glyceroyl phosphate + NADH + H(+). It functions in the pathway carbohydrate degradation; glycolysis; pyruvate from D-glyceraldehyde 3-phosphate: step 1/5. This Kluyveromyces marxianus (Yeast) protein is Glyceraldehyde-3-phosphate dehydrogenase 2 (GAP2).